Reading from the N-terminus, the 523-residue chain is Synaptotagmin-10 (523 aa).

Residues 1 to 55 are Vesicular-facing; that stretch reads MSFRKEDGVSSLCQKALHIITELCFAGQVEWDKCSGIFPADRSGQGGGGTDISVS. The tract at residues 13 to 35 is cysteine motif; the sequence is CQKALHIITELCFAGQVEWDKCS. A helical membrane pass occupies residues 56–76; the sequence is LLAVVVSFCGLALLVVSLFVF. Over 77 to 523 the chain is Cytoplasmic; it reads WKLCWPCWKS…CSSPRPPSTP (447 aa). Threonine 136 is subject to Phosphothreonine. C2 domains lie at 231-352 and 363-496; these read TCGK…TVWK and DLGE…THWH. Ca(2+)-binding residues include aspartate 262, aspartate 268, aspartate 320, phenylalanine 321, aspartate 322, serine 325, aspartate 328, aspartate 394, aspartate 400, aspartate 454, and aspartate 456.

This sequence belongs to the synaptotagmin family. In terms of assembly, homodimer; disulfide-linked via the cysteine motif. Can also form heterodimers with SYT3, SYT6, SYT7 and SYT9. Ca(2+) serves as cofactor.

The protein resides in the cytoplasmic vesicle. It is found in the secretory vesicle membrane. Functionally, ca(2+) sensor specifically required for the Ca(2+)-dependent exocytosis of secretory vesicles containing IGF1 in neurons of the olfactory bulb. Exocytosis of IGF1 is required for sensory perception of smell. Not involved in Ca(2+)-dependent synaptic vesicle exocytosis. Acts through Ca(2+) and phospholipid binding to the C2 domain: Ca(2+) induces binding of the C2-domains to phospholipid membranes and to assembled SNARE-complexes; both actions contribute to triggering exocytosis. This chain is Synaptotagmin-10 (Syt10), found in Rattus norvegicus (Rat).